The chain runs to 77 residues: Acyl carrier protein (77 aa).

The Carrier domain maps to 2–77 (AEVFDRVKEI…DAVDYINSKA (76 aa)). An O-(pantetheine 4'-phosphoryl)serine modification is found at S37.

Belongs to the acyl carrier protein (ACP) family. 4'-phosphopantetheine is transferred from CoA to a specific serine of apo-ACP by AcpS. This modification is essential for activity because fatty acids are bound in thioester linkage to the sulfhydryl of the prosthetic group.

The protein resides in the cytoplasm. It participates in lipid metabolism; fatty acid biosynthesis. In terms of biological role, carrier of the growing fatty acid chain in fatty acid biosynthesis. This chain is Acyl carrier protein, found in Oceanobacillus iheyensis (strain DSM 14371 / CIP 107618 / JCM 11309 / KCTC 3954 / HTE831).